Reading from the N-terminus, the 103-residue chain is SOSS complex subunit C (103 aa).

It belongs to the SOSS-C family. Belongs to the multiprotein complex Integrator. Component of the SOSS complex, composed of SOSS-B (SOSS-B1/NABP2 or SOSS-B2/NABP1), SOSS-A/INTS3 and SOSS-C/INIP.

It localises to the nucleus. Component of the SOSS complex, a multiprotein complex that functions downstream of the MRN complex to promote DNA repair and G2/M checkpoint. The SOSS complex associates with single-stranded DNA at DNA lesions and influences diverse endpoints in the cellular DNA damage response including cell-cycle checkpoint activation, recombinational repair and maintenance of genomic stability. Required for efficient homologous recombination-dependent repair of double-strand breaks (DSBs). This Gallus gallus (Chicken) protein is SOSS complex subunit C (INIP).